The sequence spans 329 residues: uncharacterized protein (329 aa).

A disordered region spans residues 284 to 303; the sequence is SGGGHSEAGGLNAPYDKSKS.

This is an uncharacterized protein from Methanocaldococcus jannaschii (strain ATCC 43067 / DSM 2661 / JAL-1 / JCM 10045 / NBRC 100440) (Methanococcus jannaschii).